The sequence spans 213 residues: MALDICVKVAVGAPDVLGDCPFSQRVLLTLEEKKLPYKTHLINVSDKPQWFLDISPEGKVPVVKLDGKWVADSDVIVGLLEEKYPEPSLKTPPEFASVGSKIFGAFVTFLKSKDANDGSEKALVDELEALENHLKTHSGPFVAGEKITAVDLSLAPKLYHLEVALGHYKNWSVPESLTSVRNYAKALFSRESFENTKAKKEIVVAGWESKVNA.

The residue at position 6 (cysteine 6) is an S-glutathionyl cysteine. The glutathione site is built by lysine 8 and aspartate 19. Residues lysine 8 and aspartate 19 each coordinate L-ascorbate. The 74-residue stretch at 10 to 83 (AVGAPDVLGD…DVIVGLLEEK (74 aa)) folds into the GST N-terminal domain. Cysteine 20 is modified (S-glutathionyl cysteine). The active-site Nucleophile is the cysteine 20. The short motif at 20-25 (CPFSQR) is the Glutathione-binding element. Lysine 47, valine 60, serine 73, histidine 160, and tryptophan 207 together coordinate glutathione. A GST C-terminal domain is found at 84–213 (YPEPSLKTPP…VAGWESKVNA (130 aa)). Residue lysine 210 coordinates L-ascorbate.

The protein belongs to the GST superfamily. DHAR family. In terms of assembly, monomer. In terms of processing, spontaneous S-glutathionylation in the presence of oxidized glutathione (GSSG).

It is found in the cytoplasm. Its subcellular location is the cytosol. It catalyses the reaction RX + glutathione = an S-substituted glutathione + a halide anion + H(+). The enzyme catalyses L-dehydroascorbate + 2 glutathione = glutathione disulfide + L-ascorbate. Displays a dual function. As a soluble protein, exhibits glutathione-dependent thiol transferase and dehydroascorbate (DHA) reductase activities. Exhibits glutathione-dependent thiol transferase and dehydroascorbate (DHA) reductase activities. Key component of the ascorbate recycling system. Involved in the redox homeostasis, especially in scavenging of ROS under oxidative stresses. Plays a role in ozone tolerance. The polypeptide is Glutathione S-transferase DHAR2 (DHAR2) (Arabidopsis thaliana (Mouse-ear cress)).